We begin with the raw amino-acid sequence, 282 residues long: NH(3)-dependent NAD(+) synthetase (282 aa).

Gly51–Ser58 is an ATP binding site. Residue Asp57 coordinates Mg(2+). Deamido-NAD(+) is bound at residue Arg148. Residue Thr168 participates in ATP binding. Glu173 provides a ligand contact to Mg(2+). Residues Lys181 and Asp188 each coordinate deamido-NAD(+). Residues Lys197 and Thr219 each contribute to the ATP site. His268–Lys269 contributes to the deamido-NAD(+) binding site.

This sequence belongs to the NAD synthetase family. Homodimer.

It catalyses the reaction deamido-NAD(+) + NH4(+) + ATP = AMP + diphosphate + NAD(+) + H(+). It functions in the pathway cofactor biosynthesis; NAD(+) biosynthesis; NAD(+) from deamido-NAD(+) (ammonia route): step 1/1. Its function is as follows. Catalyzes the ATP-dependent amidation of deamido-NAD to form NAD. Uses ammonia as a nitrogen source. The polypeptide is NH(3)-dependent NAD(+) synthetase (Burkholderia cenocepacia (strain HI2424)).